Consider the following 281-residue polypeptide: Ornithine lipid ester-linked acyl 2-hydroxylase (281 aa).

Polar residues predominate over residues 1 to 24; that stretch reads MTESPLSAPAPTSNQSPAPEQTFG. Residues 1–29 form a disordered region; the sequence is MTESPLSAPAPTSNQSPAPEQTFGTAGIA.

Belongs to the aspartyl/asparaginyl beta-hydroxylase family.

The catalysed reaction is an N(2)-[(3R)-3-(2-saturated-acyloxy)acyl]-L-ornithine lipid + 2-oxoglutarate + O2 = a 2-hydroxyornithine lipid + succinate + CO2. Its pathway is lipid metabolism. In terms of biological role, involved in the biosynthesis of ornithine lipids (OLs), which are phosphorus-free membrane lipids. Catalyzes the hydroxylation at the 2 position of the secondary fatty acid of OL. Contributes to symbiotic performance and acid tolerance. The polypeptide is Ornithine lipid ester-linked acyl 2-hydroxylase (Rhizobium tropici).